The primary structure comprises 217 residues: ATP-dependent Clp protease proteolytic subunit (217 aa).

Ser121 serves as the catalytic Nucleophile. His146 is an active-site residue.

The protein belongs to the peptidase S14 family. In terms of assembly, fourteen ClpP subunits assemble into 2 heptameric rings which stack back to back to give a disk-like structure with a central cavity, resembling the structure of eukaryotic proteasomes.

It is found in the cytoplasm. The catalysed reaction is Hydrolysis of proteins to small peptides in the presence of ATP and magnesium. alpha-casein is the usual test substrate. In the absence of ATP, only oligopeptides shorter than five residues are hydrolyzed (such as succinyl-Leu-Tyr-|-NHMec, and Leu-Tyr-Leu-|-Tyr-Trp, in which cleavage of the -Tyr-|-Leu- and -Tyr-|-Trp bonds also occurs).. Its function is as follows. Cleaves peptides in various proteins in a process that requires ATP hydrolysis. Has a chymotrypsin-like activity. Plays a major role in the degradation of misfolded proteins. The protein is ATP-dependent Clp protease proteolytic subunit of Burkholderia cenocepacia (strain HI2424).